The primary structure comprises 96 residues: Large ribosomal subunit protein uL23 (96 aa).

This sequence belongs to the universal ribosomal protein uL23 family. As to quaternary structure, part of the 50S ribosomal subunit. Contacts protein L29, and trigger factor when it is bound to the ribosome.

One of the early assembly proteins it binds 23S rRNA. One of the proteins that surrounds the polypeptide exit tunnel on the outside of the ribosome. Forms the main docking site for trigger factor binding to the ribosome. This chain is Large ribosomal subunit protein uL23, found in Aster yellows witches'-broom phytoplasma (strain AYWB).